Reading from the N-terminus, the 890-residue chain is Translation initiation factor IF-2 (890 aa).

The interval 110–216 (ISKPISKAPQ…KKPLIKTQDH (107 aa)) is disordered. A compositionally biased stretch (basic residues) spans 135–148 (VPKRKGLVIIKKKR). Residues 184 to 199 (KSYNEPKNKENDDIKK) show a composition bias toward basic and acidic residues. Residues 200 to 210 (QKVKKEKKKPL) are compositionally biased toward basic residues. Residues 387–554 (TRPPVVTIMG…NILLQAEILE (168 aa)) enclose the tr-type G domain. Residues 396–403 (GHVDHGKT) form a G1 region. Position 396 to 403 (396 to 403 (GHVDHGKT)) interacts with GTP. The G2 stretch occupies residues 421–425 (GITQH). Residues 442–445 (DTPG) are G3. GTP-binding positions include 442–446 (DTPGH) and 496–499 (NKMD). The tract at residues 496–499 (NKMD) is G4. The G5 stretch occupies residues 532–534 (SAR).

It belongs to the TRAFAC class translation factor GTPase superfamily. Classic translation factor GTPase family. IF-2 subfamily.

Its subcellular location is the cytoplasm. Functionally, one of the essential components for the initiation of protein synthesis. Protects formylmethionyl-tRNA from spontaneous hydrolysis and promotes its binding to the 30S ribosomal subunits. Also involved in the hydrolysis of GTP during the formation of the 70S ribosomal complex. The protein is Translation initiation factor IF-2 of Aliarcobacter butzleri (strain RM4018) (Arcobacter butzleri).